Consider the following 103-residue polypeptide: Large ribosomal subunit protein bL21 (103 aa).

The protein belongs to the bacterial ribosomal protein bL21 family. In terms of assembly, part of the 50S ribosomal subunit. Contacts protein L20.

This protein binds to 23S rRNA in the presence of protein L20. In Shewanella putrefaciens (strain CN-32 / ATCC BAA-453), this protein is Large ribosomal subunit protein bL21.